The primary structure comprises 673 residues: Glycine--tRNA ligase beta subunit (673 aa).

It belongs to the class-II aminoacyl-tRNA synthetase family. Tetramer of two alpha and two beta subunits.

It is found in the cytoplasm. It carries out the reaction tRNA(Gly) + glycine + ATP = glycyl-tRNA(Gly) + AMP + diphosphate. The sequence is that of Glycine--tRNA ligase beta subunit from Lactococcus lactis subsp. lactis (strain IL1403) (Streptococcus lactis).